A 302-amino-acid chain; its full sequence is 4-hydroxy-tetrahydrodipicolinate synthase (302 aa).

Thr55 contacts pyruvate. Residue Tyr144 is the Proton donor/acceptor of the active site. Residue Lys172 is the Schiff-base intermediate with substrate of the active site. Pyruvate is bound at residue Val214.

It belongs to the DapA family. As to quaternary structure, homotetramer; dimer of dimers.

It is found in the cytoplasm. It carries out the reaction L-aspartate 4-semialdehyde + pyruvate = (2S,4S)-4-hydroxy-2,3,4,5-tetrahydrodipicolinate + H2O + H(+). It participates in amino-acid biosynthesis; L-lysine biosynthesis via DAP pathway; (S)-tetrahydrodipicolinate from L-aspartate: step 3/4. Its function is as follows. Catalyzes the condensation of (S)-aspartate-beta-semialdehyde [(S)-ASA] and pyruvate to 4-hydroxy-tetrahydrodipicolinate (HTPA). The chain is 4-hydroxy-tetrahydrodipicolinate synthase from Synechococcus sp. (strain CC9311).